Here is a 997-residue protein sequence, read N- to C-terminus: DNA polymerase I (997 aa).

Residues 174–261 form the 5'-3' exonuclease domain; that stretch reads VMPTQLLDLF…VPCVFSLEDS (88 aa). One can recognise a 3'-5' exonuclease domain in the interval 428–589; it reads VPDVSLHTES…LYHYLKLRLE (162 aa).

It belongs to the DNA polymerase type-A family.

It carries out the reaction DNA(n) + a 2'-deoxyribonucleoside 5'-triphosphate = DNA(n+1) + diphosphate. Functionally, in addition to polymerase activity, this DNA polymerase exhibits 3'-5' and 5'-3' exonuclease activity. This chain is DNA polymerase I (polA), found in Treponema pallidum (strain Nichols).